The chain runs to 1238 residues: Anion exchange protein 2 (1238 aa).

The interval 1–238 (MSGTPRRPAS…YNLQERRRIG (238 aa)) is disordered. Residues 1–704 (MSGTPRRPAS…SDFRDALDPQ (704 aa)) lie on the Cytoplasmic side of the membrane. 2 stretches are compositionally biased toward basic and acidic residues: residues 37-49 (DLHR…RFEE) and 58-75 (GGEE…EYHR). Composition is skewed to basic residues over residues 76-85 (QSSHHIHHPL) and 94-110 (RRRK…RRRP). Over residues 120–133 (TIEEGEEDEDETSE) the composition is skewed to acidic residues. Phosphoserine occurs at positions 132, 144, 170, and 172. Polar residues predominate over residues 141–154 (TDPSPASTPTSVQF). Over residues 205 to 215 (GTAGGDDGGAS) the composition is skewed to gly residues. A Phosphoserine modification is found at Ser239. A Phosphothreonine modification is found at Thr253. Lys270 is modified (N6-methyllysine). The tract at residues 277 to 315 (VPGVRRHLVRKNAKGSSQSSREGREPGPTPRTRPRAPHK) is disordered. Residues 280–289 (VRRHLVRKNA) show a composition bias toward basic residues. A Phosphoserine modification is found at Ser439. The tract at residues 445–466 (SLLGHHHTQGAESDPHVTEPLI) is disordered. A run of 4 helical transmembrane segments spans residues 705 to 728 (CLAA…GLLG), 734 to 771 (LIGV…LLVF), 791 to 813 (VWIG…SFLV), and 823 to 844 (IFAF…VKIF). The membrane (anion exchange) stretch occupies residues 705 to 1238 (CLAAVIFIYF…DEYNEMPMPV (534 aa)). The Extracellular segment spans residues 845–897 (QEHPLHGCLASNSSEADGGKNTTWTEAAPTPGHGNTSSAEQAGVERPQGQPNT). 3 N-linked (GlcNAc...) asparagine glycosylation sites follow: Asn856, Asn865, and Asn879. A compositionally biased stretch (polar residues) spans 858–869 (SEADGGKNTTWT). Residues 858 to 892 (SEADGGKNTTWTEAAPTPGHGNTSSAEQAGVERPQ) form a disordered region. A helical membrane pass occupies residues 898–915 (ALLSLVLMAGTFFIAFFL). At 916 to 930 (RKFKNSRFFPGRIRR) the chain is on the cytoplasmic side. Transmembrane regions (helical) follow at residues 931–951 (VIGD…DYSI), 985–1007 (PFPV…LIFM), 1033–1054 (LLLI…LAAA), 1088–1133 (VTGL…IQFY), and 1160–1196 (MHLF…TVPL). Residue Cys1170 is the site of S-palmitoyl cysteine attachment.

It belongs to the anion exchanger (TC 2.A.31) family. In terms of tissue distribution, expressed in the cochlea (at protein level).

It is found in the apical cell membrane. The protein localises to the basolateral cell membrane. The catalysed reaction is hydrogencarbonate(in) + chloride(out) = hydrogencarbonate(out) + chloride(in). Sodium-independent anion exchanger which mediates the electroneutral exchange of chloride for bicarbonate ions across the cell membrane. Plays an important role in osteoclast differentiation and function. Regulates bone resorption and calpain-dependent actin cytoskeleton organization in osteoclasts via anion exchange-dependent control of pH. Essential for intracellular pH regulation in CD8(+) T-cells upon CD3 stimulation, modulating CD8(+) T-cell response. In Cavia porcellus (Guinea pig), this protein is Anion exchange protein 2 (SLC4A2).